Here is a 587-residue protein sequence, read N- to C-terminus: Integrator complex subunit 14 (587 aa).

One can recognise a VWFA domain in the interval 3 to 113 (TLIALDASLS…NILQVVVFTD (111 aa)). 2 disordered regions span residues 190 to 211 (KSSD…KSEL) and 304 to 331 (REKS…DTSN).

This sequence belongs to the Integrator subunit 14 family. In terms of assembly, belongs to the multiprotein complex Integrator, at least composed of IntS1, IntS2, IntS3, IntS4, omd/IntS5, IntS6, defl/IntS7, IntS8, IntS9, IntS10, IntS11, IntS12, asun/IntS13, IntS14 and IntS15. The core complex associates with protein phosphatase 2A subunits mts/PP2A and Pp2A-29B, to form the Integrator-PP2A (INTAC) complex.

The protein localises to the nucleus. Its function is as follows. Component of the integrator complex, a multiprotein complex that terminates RNA polymerase II (Pol II) transcription in the promoter-proximal region of genes. The integrator complex provides a quality checkpoint during transcription elongation by driving premature transcription termination of transcripts that are unfavorably configured for transcriptional elongation: the complex terminates transcription by (1) catalyzing dephosphorylation of the C-terminal domain (CTD) of Pol II subunit Polr2A/Rbp1 and Spt5, and (2) degrading the exiting nascent RNA transcript via endonuclease activity. The integrator complex is also involved in the 3'-end processing of the U7 snRNA, and also the spliceosomal snRNAs U1, U2, U4 and U5. The protein is Integrator complex subunit 14 of Drosophila melanogaster (Fruit fly).